We begin with the raw amino-acid sequence, 216 residues long: Adenylate kinase (216 aa).

Gly-10–Thr-15 contributes to the ATP binding site. The tract at residues Ser-30–Val-59 is NMP. AMP-binding positions include Thr-31, Arg-36, Ala-57–Val-59, Gly-85–Arg-88, and Gln-92. The tract at residues Gly-126–Asp-163 is LID. Residue Arg-127 participates in ATP binding. Residues Cys-130 and Cys-133 each coordinate Zn(2+). Thr-136 to Tyr-137 contacts ATP. Cys-150 and Cys-153 together coordinate Zn(2+). Residues Arg-160 and Arg-171 each contribute to the AMP site. Gln-199 contributes to the ATP binding site.

The protein belongs to the adenylate kinase family. Monomer.

The protein localises to the cytoplasm. It carries out the reaction AMP + ATP = 2 ADP. It participates in purine metabolism; AMP biosynthesis via salvage pathway; AMP from ADP: step 1/1. Functionally, catalyzes the reversible transfer of the terminal phosphate group between ATP and AMP. Plays an important role in cellular energy homeostasis and in adenine nucleotide metabolism. The protein is Adenylate kinase of Bacillus mycoides (strain KBAB4) (Bacillus weihenstephanensis).